We begin with the raw amino-acid sequence, 245 residues long: MATRTQFENSNEIGVFSKLTNTYCLVAVGGSENFYSAFEAELGDAIPIVHTTIAGTRIIGRMTAGNRRGLLVPTQTTDQELQHLRNSLPDSVKIQRVEERLSALGNVICCNDYVALVHPDIDRETEELISDVLGVEVFRQTISGNILVGSYCSLSNQGGLVHPQTSVQDQEELSSLLQVPLVAGTVNRGSSVVGAGMVVNDYLAVTGLDTTAPELSVIESIFRLQDAQPESISGNLRDTLIETYS.

2 positions are modified to phosphoserine; by CK1: S174 and S175. S231 carries the post-translational modification Phosphoserine.

This sequence belongs to the eIF-6 family. Monomer. Associates with the 60S ribosomal subunit. Phosphorylation at Ser-174 and Ser-175 promotes nuclear export.

The protein resides in the cytoplasm. It is found in the nucleus. The protein localises to the nucleolus. Its function is as follows. Binds to the 60S ribosomal subunit and prevents its association with the 40S ribosomal subunit to form the 80S initiation complex in the cytoplasm. Is also involved in ribosome biogenesis. Associates with pre-60S subunits in the nucleus and is involved in its nuclear export. Cytoplasmic release of TIF6 from 60S subunits and nuclear relocalization is promoted by the GTPase RIA1/EFL1 and by SDO1. Also required for pre-rRNA processing. The chain is Eukaryotic translation initiation factor 6 from Saccharomyces cerevisiae (strain ATCC 204508 / S288c) (Baker's yeast).